The following is a 405-amino-acid chain: Argininosuccinate synthase (405 aa).

ATP-binding positions include 12-20 (AYSGGLDTS) and A40. 2 residues coordinate L-citrulline: Y92 and S97. G122 contributes to the ATP binding site. T124, N128, and D129 together coordinate L-aspartate. N128 provides a ligand contact to L-citrulline. The L-citrulline site is built by R132, S181, S190, E266, and Y278.

Belongs to the argininosuccinate synthase family. Type 1 subfamily. Homotetramer.

It is found in the cytoplasm. It catalyses the reaction L-citrulline + L-aspartate + ATP = 2-(N(omega)-L-arginino)succinate + AMP + diphosphate + H(+). Its pathway is amino-acid biosynthesis; L-arginine biosynthesis; L-arginine from L-ornithine and carbamoyl phosphate: step 2/3. The sequence is that of Argininosuccinate synthase from Edwardsiella ictaluri (strain 93-146).